The sequence spans 452 residues: Protein henna (452 aa).

The region spanning 36 to 107 (FSPKDSSLSS…EQCSYFNIIS (72 aa)) is the ACT domain. Phosphoserine; by CaMK2 is present on Ser272. Positions 284, 289, and 329 each coordinate Fe cation.

The protein belongs to the biopterin-dependent aromatic amino acid hydroxylase family. The cofactor is Fe(2+). Phenylalanine hydrolase activity is found in yolk granules of embryos, and female abdomen and fat body tissues. Tryptophan hydroxylase is expressed in serotonergic neurons. Both enzymes are present in cuticular tissues.

It carries out the reaction (6R)-L-erythro-5,6,7,8-tetrahydrobiopterin + L-phenylalanine + O2 = (4aS,6R)-4a-hydroxy-L-erythro-5,6,7,8-tetrahydrobiopterin + L-tyrosine. The catalysed reaction is (6R)-L-erythro-5,6,7,8-tetrahydrobiopterin + L-tryptophan + O2 = 5-hydroxy-L-tryptophan + (4aS,6R)-4a-hydroxy-L-erythro-5,6,7,8-tetrahydrobiopterin. Its pathway is amino-acid degradation; L-phenylalanine degradation; acetoacetate and fumarate from L-phenylalanine: step 1/6. With respect to regulation, N-terminal region of PAH is thought to contain allosteric binding sites for phenylalanine and to constitute an 'inhibitory' domain that regulates the activity of a catalytic domain in the C-terminal portion of the molecule. This Drosophila melanogaster (Fruit fly) protein is Protein henna (Hn).